The sequence spans 222 residues: Putative serine proteinase inhibitor 2 homolog second part (222 aa).

Belongs to the serpin family. Poxviruses subfamily.

The sequence is that of Putative serine proteinase inhibitor 2 homolog second part from Homo sapiens (Human).